The sequence spans 297 residues: Thiosulfate sulfurtransferase (297 aa).

Lysine 14 is subject to N6-acetyllysine; alternate. Lysine 14 is subject to N6-succinyllysine; alternate. The Rhodanese 1 domain maps to 25–143 (VGPGLRVLDA…WLKEGHPVTS (119 aa)). An O-linked (GlcNAc) serine glycan is attached at serine 35. The residue at position 38 (serine 38) is a Phosphoserine. Lysine 136 carries the N6-acetyllysine; alternate modification. Lysine 136 bears the N6-succinyllysine; alternate mark. Positions 144–159 (EPSRPEPAIFKATLNR) are hinge. Lysine 163 carries the N6-acetyllysine modification. The region spanning 173–288 (ESKRFQLVDS…WFHRAPPETW (116 aa)) is the Rhodanese 2 domain. Lysine 175 carries the post-translational modification N6-acetyllysine; alternate. Residue lysine 175 is modified to N6-succinyllysine; alternate. Arginine 187 is a binding site for substrate. Lysine 224 is modified (N6-acetyllysine; alternate). The residue at position 224 (lysine 224) is an N6-succinyllysine; alternate. The residue at position 236 (lysine 236) is an N6-acetyllysine. N6-acetyllysine; alternate is present on lysine 237. Lysine 237 bears the N6-succinyllysine; alternate mark. Residue cysteine 248 is the Cysteine persulfide intermediate of the active site. Lysine 250 provides a ligand contact to substrate.

As to quaternary structure, monomer. As to expression, expressed in numerous tissues.

The protein resides in the mitochondrion matrix. It catalyses the reaction thiosulfate + hydrogen cyanide = thiocyanate + sulfite + 2 H(+). Functionally, together with MRPL18, acts as a mitochondrial import factor for the cytosolic 5S rRNA. Only the nascent unfolded cytoplasmic form is able to bind to the 5S rRNA. Formation of iron-sulfur complexes and cyanide detoxification. Binds molecular oxygen and sulfur. The polypeptide is Thiosulfate sulfurtransferase (TST) (Bos taurus (Bovine)).